Reading from the N-terminus, the 151-residue chain is uncharacterized protein (151 aa).

Residues 35 to 147 (GIFENERQKL…RETLQESLED (113 aa)) adopt a coiled-coil conformation.

This is an uncharacterized protein from Helicobacter hepaticus (strain ATCC 51449 / 3B1).